We begin with the raw amino-acid sequence, 178 residues long: Interleukin-10 (178 aa).

Positions 1–18 (MHSSALLCCLVLLTGVRA) are cleaved as a signal peptide. Cystine bridges form between Cys30/Cys126 and Cys80/Cys132. Asn134 carries N-linked (GlcNAc...) asparagine glycosylation.

This sequence belongs to the IL-10 family. Homodimer. Interacts with IL10RA and IL10RB.

The protein resides in the secreted. In terms of biological role, major immune regulatory cytokine that acts on many cells of the immune system where it has profound anti-inflammatory functions, limiting excessive tissue disruption caused by inflammation. Mechanistically, IL10 binds to its heterotetrameric receptor comprising IL10RA and IL10RB leading to JAK1 and STAT2-mediated phosphorylation of STAT3. In turn, STAT3 translocates to the nucleus where it drives expression of anti-inflammatory mediators. Targets antigen-presenting cells (APCs) such as macrophages and monocytes and inhibits their release of pro-inflammatory cytokines including granulocyte-macrophage colony-stimulating factor /GM-CSF, granulocyte colony-stimulating factor/G-CSF, IL-1 alpha, IL-1 beta, IL-6, IL-8 and TNF-alpha. Also interferes with antigen presentation by reducing the expression of MHC-class II and co-stimulatory molecules, thereby inhibiting their ability to induce T cell activation. In addition, controls the inflammatory response of macrophages by reprogramming essential metabolic pathways including mTOR signaling. This is Interleukin-10 (IL10) from Macaca fascicularis (Crab-eating macaque).